Consider the following 495-residue polypeptide: MVYENPDGIRIGLEIHVQLNKLKTKMFCGCSTDYHNAAPNTHTCPVCLGLPGALPVLNKKAVEAAIKVGLALEGEIAEETQFHRKNYFYPDLPKGFQVTQYDYPIVSKGKVVIEGEDGEHVVGITRAHMEEDPGKLVHIGSIEKSKGVLIDYNRSGMPLIETVTEPDMRSPKEARRFLDKFRNILEYLDVFDGNLEGAMRVDANVSVHWGTRVEVKNISSHKGVERALLYEIMRQKNVIRRGGKITQETRHFDEGRGVTISMRTKEEAEDYRYFREPDLMPMRVTGWIPAIKETLPELPDAKRARFMEQYGITDMHARALTSKIMLADFYEGVCAKGVDPKVAATWTADVLLGELNYRDLAISSYDGRTIGFIHAKDPEVENSFKVSDMVELVTLFAEGKVSDRAAVEVIRTILDGNEEKSPSQIIEEKGLFKAEDDLVTRAVAETIAENEAAVQDYLGGTEKSLNFLVGQVMKKTKGTADAKTARELIVKELKG.

This sequence belongs to the GatB/GatE family. GatB subfamily. In terms of assembly, heterotrimer of A, B and C subunits.

It catalyses the reaction L-glutamyl-tRNA(Gln) + L-glutamine + ATP + H2O = L-glutaminyl-tRNA(Gln) + L-glutamate + ADP + phosphate + H(+). The enzyme catalyses L-aspartyl-tRNA(Asn) + L-glutamine + ATP + H2O = L-asparaginyl-tRNA(Asn) + L-glutamate + ADP + phosphate + 2 H(+). Functionally, allows the formation of correctly charged Asn-tRNA(Asn) or Gln-tRNA(Gln) through the transamidation of misacylated Asp-tRNA(Asn) or Glu-tRNA(Gln) in organisms which lack either or both of asparaginyl-tRNA or glutaminyl-tRNA synthetases. The reaction takes place in the presence of glutamine and ATP through an activated phospho-Asp-tRNA(Asn) or phospho-Glu-tRNA(Gln). In Methanosarcina mazei (strain ATCC BAA-159 / DSM 3647 / Goe1 / Go1 / JCM 11833 / OCM 88) (Methanosarcina frisia), this protein is Aspartyl/glutamyl-tRNA(Asn/Gln) amidotransferase subunit B.